The sequence spans 156 residues: Ribosomal RNA large subunit methyltransferase H (156 aa).

Residues Leu73, Gly104, and Leu123–Leu128 each bind S-adenosyl-L-methionine.

The protein belongs to the RNA methyltransferase RlmH family. Homodimer.

It is found in the cytoplasm. The catalysed reaction is pseudouridine(1915) in 23S rRNA + S-adenosyl-L-methionine = N(3)-methylpseudouridine(1915) in 23S rRNA + S-adenosyl-L-homocysteine + H(+). Specifically methylates the pseudouridine at position 1915 (m3Psi1915) in 23S rRNA. The sequence is that of Ribosomal RNA large subunit methyltransferase H from Neisseria gonorrhoeae (strain NCCP11945).